Consider the following 96-residue polypeptide: Glutamyl-tRNA(Gln) amidotransferase subunit C (96 aa).

Belongs to the GatC family. In terms of assembly, heterotrimer of A, B and C subunits.

It catalyses the reaction L-glutamyl-tRNA(Gln) + L-glutamine + ATP + H2O = L-glutaminyl-tRNA(Gln) + L-glutamate + ADP + phosphate + H(+). The enzyme catalyses L-aspartyl-tRNA(Asn) + L-glutamine + ATP + H2O = L-asparaginyl-tRNA(Asn) + L-glutamate + ADP + phosphate + 2 H(+). Allows the formation of correctly charged Asn-tRNA(Asn) or Gln-tRNA(Gln) through the transamidation of misacylated Asp-tRNA(Asn) or Glu-tRNA(Gln) in organisms which lack either or both of asparaginyl-tRNA or glutaminyl-tRNA synthetases. The reaction takes place in the presence of glutamine and ATP through an activated phospho-Asp-tRNA(Asn) or phospho-Glu-tRNA(Gln). In Neisseria meningitidis serogroup B (strain ATCC BAA-335 / MC58), this protein is Glutamyl-tRNA(Gln) amidotransferase subunit C.